The primary structure comprises 266 residues: MENLNRGGFDFDLCNRNNVLEKTGLRMKGFMKTGTTIVGVVYKGGVVLGADTRATEGPIVADKNCEKIHYIADNIYCCGAGTAADTESATALISSKLKLHKLSTGKQTRVITALTMLKQMLFKYQGHISAALILGGIDINGPSLHTIYPHGSTDQLPYVTMGSGSLAAMAVFEAKYKNDMTKEEAIALVAEAISSGIFNDLGSGSNVDVTVIEPSGVTVLRNYQTPNERKFRNNPYIFKQGTTPVLKQDIAPLSTKVVIEDIMMGQ.

A propeptide spans 1-34 (MENLNRGGFDFDLCNRNNVLEKTGLRMKGFMKTG) (removed in mature form). Thr35 serves as the catalytic Nucleophile.

Belongs to the peptidase T1B family. The 26S proteasome consists of a 20S proteasome core and two 19S regulatory subunits. The 20S proteasome core is composed of 28 subunits that are arranged in four stacked rings, resulting in a barrel-shaped structure. The two end rings are each formed by seven alpha subunits, and the two central rings are each formed by seven beta subunits. The catalytic chamber with the active sites is on the inside of the barrel.

The protein localises to the cytoplasm. It is found in the nucleus. It catalyses the reaction Cleavage of peptide bonds with very broad specificity.. Its function is as follows. The proteasome is a multicatalytic proteinase complex which is characterized by its ability to cleave peptides with Arg, Phe, Tyr, Leu, and Glu adjacent to the leaving group at neutral or slightly basic pH. The proteasome has an ATP-dependent proteolytic activity. The chain is Proteasome subunit beta type-7 (psmB7) from Dictyostelium discoideum (Social amoeba).